A 339-amino-acid chain; its full sequence is Putative clathrin assembly protein At1g14686 (339 aa).

The ENTH domain occupies Ser16–Arg148. The tract at residues Glu283–Thr307 is disordered. Acidic residues predominate over residues Ala295 to Ile305.

It localises to the membrane. Its subcellular location is the clathrin-coated pit. The protein localises to the golgi apparatus. It is found in the cytoplasmic vesicle. The protein resides in the clathrin-coated vesicle. The protein is Putative clathrin assembly protein At1g14686 of Arabidopsis thaliana (Mouse-ear cress).